A 338-amino-acid polypeptide reads, in one-letter code: MRYIEFDEKRKFDIVPVGRVAIDFNPTDIHKPLSESRNFNKYLGGSPANIAVGLARLGKKVGFIGKVSDDRFGEFVVNYFKKEGIDVSEISKAKNGESLGLTFTEILSPTESSILMYRNGIADLQLDVDDIDEDYIKNTKAIVISGTALAMSPSREAALKALRLAKKNGTVVIFDVDYREYNWKNKDEIAIYYSIVGKESDIIMGSREEFDLMEGLIAKDSTDEETAKRWLDYGNKIVVIKHGKDGSTAYTRDGKAYRIKPFPVKLLKSFGGGDAYASAFIYGILEGWDMMDALEFGSASAAMLVASHSCSEDMPTVEAIKEFIKKEKEEYGEMVARS.

This sequence belongs to the carbohydrate kinase PfkB family.

It carries out the reaction 5-dehydro-2-deoxy-D-gluconate + ATP = 6-phospho-5-dehydro-2-deoxy-D-gluconate + ADP + H(+). It functions in the pathway polyol metabolism; myo-inositol degradation into acetyl-CoA; acetyl-CoA from myo-inositol: step 5/7. Its function is as follows. Catalyzes the phosphorylation of 5-dehydro-2-deoxy-D-gluconate (2-deoxy-5-keto-D-gluconate or DKG) to 6-phospho-5-dehydro-2-deoxy-D-gluconate (DKGP). In Clostridium perfringens (strain ATCC 13124 / DSM 756 / JCM 1290 / NCIMB 6125 / NCTC 8237 / Type A), this protein is 5-dehydro-2-deoxygluconokinase.